Consider the following 270-residue polypeptide: Formamidopyrimidine-DNA glycosylase (270 aa).

P2 functions as the Schiff-base intermediate with DNA in the catalytic mechanism. Residue E3 is the Proton donor of the active site. K58 (proton donor; for beta-elimination activity) is an active-site residue. Residues H91, R110, and R151 each contribute to the DNA site. The segment at 236 to 270 (LVYGRDGLPCPNCGRALKHATIGQRASVWCSHCQR) adopts an FPG-type zinc-finger fold. Residue R260 is the Proton donor; for delta-elimination activity of the active site.

The protein belongs to the FPG family. Monomer. Zn(2+) serves as cofactor.

It carries out the reaction Hydrolysis of DNA containing ring-opened 7-methylguanine residues, releasing 2,6-diamino-4-hydroxy-5-(N-methyl)formamidopyrimidine.. The catalysed reaction is 2'-deoxyribonucleotide-(2'-deoxyribose 5'-phosphate)-2'-deoxyribonucleotide-DNA = a 3'-end 2'-deoxyribonucleotide-(2,3-dehydro-2,3-deoxyribose 5'-phosphate)-DNA + a 5'-end 5'-phospho-2'-deoxyribonucleoside-DNA + H(+). Involved in base excision repair of DNA damaged by oxidation or by mutagenic agents. Acts as a DNA glycosylase that recognizes and removes damaged bases. Has a preference for oxidized purines, such as 7,8-dihydro-8-oxoguanine (8-oxoG). Has AP (apurinic/apyrimidinic) lyase activity and introduces nicks in the DNA strand. Cleaves the DNA backbone by beta-delta elimination to generate a single-strand break at the site of the removed base with both 3'- and 5'-phosphates. This chain is Formamidopyrimidine-DNA glycosylase, found in Stenotrophomonas maltophilia (strain K279a).